Here is a 187-residue protein sequence, read N- to C-terminus: MNKRRVKMRKEIRLSGFGGQGIILAGVILGRAAALYDNKEAVQTQSYGPEARGGASKSEVVISDEPIDFPKVIKPDILVCLSQQAYDKYKDDIKEGGVVLVDEDLVSTDKMPEVDVTMYKIPFTRIASEEIKLPIVANIVMLGALTRLTNIVSKESMEKAILDSVPKGTEEKNLLAFSKGYEVAKEL.

Heterotetramer of the KorA, KorB, KorC and KorD subunits.

It catalyses the reaction 2 oxidized [2Fe-2S]-[ferredoxin] + 2-oxoglutarate + CoA = succinyl-CoA + 2 reduced [2Fe-2S]-[ferredoxin] + CO2 + H(+). The sequence is that of 2-oxoglutarate synthase subunit KorC (korC) from Methanocaldococcus jannaschii (strain ATCC 43067 / DSM 2661 / JAL-1 / JCM 10045 / NBRC 100440) (Methanococcus jannaschii).